Reading from the N-terminus, the 192-residue chain is Virion infectivity factor (192 aa).

Residues 14–17 (DRMR) form an interaction with host APOBEC3F; F1-box region. The tract at residues 40–44 (YRHHY) is interaction with host APOBEC3G; G-box. Residues 54–72 (EVHIPLGEARLVVTTYWGL) are interaction with host APOBEC3F and APOBEC3G; FG-box. An interaction with host APOBEC3F; F2-box region spans residues 74-79 (TGEKEW). Positions 75-114 (GEKEWHLGQGVSIEWRKRRYSTQVDPGLADQLIHMYYFDC) are RNA-binding. Thr-96 is subject to Phosphothreonine; by host MAP4K1. Residues His-108, Cys-114, Cys-133, and His-139 each contribute to the Zn(2+) site. An HCCH motif motif is present at residues 108-139 (HMYYFDCFAESAIRKAILGHIVSPSCEYQAGH). Ser-144 bears the Phosphoserine; by host mark. The short motif at 144–153 (SLQYLALAAL) is the BC-box-like motif element. A multimerization region spans residues 151-164 (AALIAPKKIKPPLP). Positions 151–180 (AALIAPKKIKPPLPSVRKLTEDRWNKPQKT) are SOCS box-like. Residue Ser-165 is modified to Phosphoserine; by host MAP4K1. The disordered stretch occupies residues 165-192 (SVRKLTEDRWNKPQKTKGRRGSHTMNGH). The interval 171–172 (ED) is membrane association. Over residues 176 to 186 (KPQKTKGRRGS) the composition is skewed to basic residues. The residue at position 188 (Thr-188) is a Phosphothreonine; by host.

It belongs to the primate lentivirus group Vif protein family. As to quaternary structure, homomultimer; in vitro and presumably in vivo. Interacts with viral RNA and Pr55Gag precursor; these interactions mediate Vif incorporation into the virion. Interacts with the viral reverse transcriptase. Forms cullin-5-RING E3 ubiquitin-protein ligase complex (ECS complex) by interacting with host CUL5, RBX2, elongin BC complex (ELOB and ELOC) and CBFB/CBF-beta. Within the ECS complex, Vif interacts directly with host CUL5, ELOC and APOBEC (APOBEC3F and APOBEC3G) substrates. The ECS complex also contains some single-stranded RNA (ssRNA) that acts as a glue that bridges Vif with APOBEC (APOBEC3F and APOBEC3G) substrates. Interacts with host UBCE7IP1 isoform 3/ZIN and possibly with SAT. Interacts with host tyrosine kinases HCK and FYN; these interactions may decrease level of phosphorylated APOBEC3G incorporation into virions. Interacts with host ABCE1; this interaction may play a role in protecting viral RNA from damage during viral assembly. Interacts with host MDM2; this interaction targets Vif for degradation by the proteasome. Processed in virion by the viral protease. In terms of processing, highly phosphorylated on serine and threonine residues. Post-translationally, polyubiquitinated and degraded by the proteasome in the presence of APOBEC3G.

Its subcellular location is the host cytoplasm. It localises to the host cell membrane. The protein resides in the virion. In terms of biological role, counteracts the innate antiviral activity of host APOBEC3F and APOBEC3G by promoting their ubiquitination and degradation. Acts as a substrate recognition component of an E3 ubiquitin-protein ligase complex: mechanistically, Vif hijacks a host cullin-5-RING E3 ubiquitin-protein ligase complex (ECS complex) and the transcription coactivator CBFB/CBF-beta to form an active E3 ubiquitin-protein ligase complex that targets APOBEC3G and APOBEC3F for polyubiquitination, leading to their degradation by the proteasome. Vif interaction with APOBEC3G also blocks its cytidine deaminase activity in a proteasome-independent manner, suggesting a dual inhibitory mechanism. May interact directly with APOBEC3G mRNA in order to inhibit its translation. Association with CBFB/CBF-beta also inhibits the transcription coactivator activity of CBFB/CBF-beta. Seems to play a role in viral morphology by affecting the stability of the viral nucleoprotein core. Finally, Vif also contributes to the G2 cell cycle arrest observed in HIV infected cells. The protein is Virion infectivity factor of Human immunodeficiency virus type 1 group M subtype D (isolate NDK) (HIV-1).